The chain runs to 354 residues: UDP-3-O-acylglucosamine N-acyltransferase (354 aa).

Catalysis depends on histidine 258, which acts as the Proton acceptor.

Belongs to the transferase hexapeptide repeat family. LpxD subfamily. As to quaternary structure, homotrimer.

The enzyme catalyses a UDP-3-O-[(3R)-3-hydroxyacyl]-alpha-D-glucosamine + a (3R)-hydroxyacyl-[ACP] = a UDP-2-N,3-O-bis[(3R)-3-hydroxyacyl]-alpha-D-glucosamine + holo-[ACP] + H(+). The protein operates within bacterial outer membrane biogenesis; LPS lipid A biosynthesis. Catalyzes the N-acylation of UDP-3-O-acylglucosamine using 3-hydroxyacyl-ACP as the acyl donor. Is involved in the biosynthesis of lipid A, a phosphorylated glycolipid that anchors the lipopolysaccharide to the outer membrane of the cell. In Sinorhizobium fredii (strain NBRC 101917 / NGR234), this protein is UDP-3-O-acylglucosamine N-acyltransferase.